A 50-amino-acid chain; its full sequence is Protein hunchback (50 aa).

3 C2H2-type zinc fingers span residues 1–5 (HIRNH), 11–33 (FKCN…LKSH), and 39–50 (YRCADCAYATKY).

The protein belongs to the hunchback C2H2-type zinc-finger protein family.

It is found in the nucleus. Functionally, gap class segmentation protein that controls development of head structures. The protein is Protein hunchback (hb) of Schultesia lampyridiformis (Firefly mimic roach).